Consider the following 337-residue polypeptide: tRNA N6-adenosine threonylcarbamoyltransferase (337 aa).

The Fe cation site is built by H111 and H115. Substrate contacts are provided by residues 134–138 (LVSGG), D167, G180, and N272. D300 contributes to the Fe cation binding site.

It belongs to the KAE1 / TsaD family. Fe(2+) serves as cofactor.

It is found in the cytoplasm. The catalysed reaction is L-threonylcarbamoyladenylate + adenosine(37) in tRNA = N(6)-L-threonylcarbamoyladenosine(37) in tRNA + AMP + H(+). In terms of biological role, required for the formation of a threonylcarbamoyl group on adenosine at position 37 (t(6)A37) in tRNAs that read codons beginning with adenine. Is involved in the transfer of the threonylcarbamoyl moiety of threonylcarbamoyl-AMP (TC-AMP) to the N6 group of A37, together with TsaE and TsaB. TsaD likely plays a direct catalytic role in this reaction. In Salmonella choleraesuis (strain SC-B67), this protein is tRNA N6-adenosine threonylcarbamoyltransferase.